We begin with the raw amino-acid sequence, 199 residues long: Probable cobalt-precorrin-6B C(15)-methyltransferase (decarboxylating) (199 aa).

Residues threonine 24, 48-52 (GCGTG), aspartate 72, and alanine 101 each bind S-adenosyl-L-methionine.

Belongs to the methyltransferase superfamily. Archaeal-type CbiT family.

It carries out the reaction Co-precorrin-6B + S-adenosyl-L-methionine = Co-precorrin-7 + S-adenosyl-L-homocysteine + CO2. The protein operates within cofactor biosynthesis; adenosylcobalamin biosynthesis; cob(II)yrinate a,c-diamide from sirohydrochlorin (anaerobic route): step 8/10. Functionally, catalyzes the methylation of C-15 in cobalt-precorrin-6B followed by the decarboxylation of C-12 to form cobalt-precorrin-7. This chain is Probable cobalt-precorrin-6B C(15)-methyltransferase (decarboxylating), found in Saccharolobus islandicus (strain L.S.2.15 / Lassen #1) (Sulfolobus islandicus).